Consider the following 546-residue polypeptide: 3-(3-hydroxy-phenyl)propionate/3-hydroxycinnamic acid hydroxylase 2 (546 aa).

FAD is bound by residues 10–39 and 278–288; these read SVAI…VVER and FVAGRIALVGD.

The protein belongs to the PheA/TfdB FAD monooxygenase family. The cofactor is FAD.

It carries out the reaction 3-(3-hydroxyphenyl)propanoate + NADH + O2 + H(+) = 3-(2,3-dihydroxyphenyl)propanoate + NAD(+) + H2O. The catalysed reaction is (2E)-3-(3-hydroxyphenyl)prop-2-enoate + NADH + O2 + H(+) = (2E)-3-(2,3-dihydroxyphenyl)prop-2-enoate + NAD(+) + H2O. It functions in the pathway aromatic compound metabolism; 3-phenylpropanoate degradation. Functionally, catalyzes the insertion of one atom of molecular oxygen into position 2 of the phenyl ring of 3-(3-hydroxyphenyl)propionate (3-HPP) and hydroxycinnamic acid (3HCI). This Burkholderia vietnamiensis (strain G4 / LMG 22486) (Burkholderia cepacia (strain R1808)) protein is 3-(3-hydroxy-phenyl)propionate/3-hydroxycinnamic acid hydroxylase 2.